The following is a 1307-amino-acid chain: Rho1 guanine nucleotide exchange factor TUS1 (1307 aa).

A compositionally biased stretch (polar residues) spans 1-10 (MYRYNRSSPF). Disordered stretches follow at residues 1-144 (MYRY…FIGN), 164-194 (PFANGFSPNSPKSPRDSSKQQAHFSDESDLR), and 219-239 (EDSEFFTKPPPPLSTSRNVSG). Residues 12 to 29 (RTPEKRVSRQESQRKSIE) show a composition bias toward basic and acidic residues. Residues 37-79 (NTRNSFLDDSDNGTDNISIGWTPISDTQQFQSPVPQAFTFTSK) are compositionally biased toward polar residues. Over residues 87 to 97 (TSSSESTPKST) the composition is skewed to low complexity. Residues 176–194 (SPRDSSKQQAHFSDESDLR) show a composition bias toward basic and acidic residues. One can recognise a DH domain in the interval 467–657 (QRQSFIFDLI…EKLNFEVNQV (191 aa)). Residues 715–877 (KLVLSGTVYK…WIDAIMESFK (163 aa)) form the PH domain. The segment at 780-802 (TSKQPLRNYSQKEHKSPMHNFST) is disordered. A CNH domain is found at 938 to 1279 (TTRILCCEDV…KLASSERREK (342 aa)).

In terms of assembly, interacts with RHO1.

In terms of biological role, guanine nucleotide-exchange factor (GEF) for RHO1 that stimulates the exchange of RHO1 GDP-bound form into GTP-bound form. Required for signaling of cell wall defects to RHO1. The chain is Rho1 guanine nucleotide exchange factor TUS1 (TUS1) from Saccharomyces cerevisiae (strain ATCC 204508 / S288c) (Baker's yeast).